The sequence spans 27 residues: Cupiennin-3d (27 aa).

Glu-27 carries the glutamic acid 1-amide modification.

As to expression, expressed by the venom gland.

The protein resides in the secreted. The sequence is that of Cupiennin-3d from Cupiennius salei (American wandering spider).